A 561-amino-acid chain; its full sequence is Malate synthase, glyoxysomal (561 aa).

Arg177 acts as the Proton acceptor in catalysis. Asp462 (proton donor) is an active-site residue. The short motif at 559 to 561 (SRL) is the Microbody targeting signal element.

It belongs to the malate synthase family.

The protein localises to the glyoxysome. It catalyses the reaction glyoxylate + acetyl-CoA + H2O = (S)-malate + CoA + H(+). The protein operates within carbohydrate metabolism; glyoxylate cycle; (S)-malate from isocitrate: step 2/2. In Brassica napus (Rape), this protein is Malate synthase, glyoxysomal.